The chain runs to 396 residues: MAKAKFERNKPHCNIGTIGHVDHGKTSLTAAITKILAETGGATFTAYDQIDKAPEEKARGITISTAHVEYETSNRHYAHVDCPGHADYVKNMITGAAQMDGAILVVSAADGPMPQTREHILLARQVGVPALVVFMNKCDMVDDPELLDLVELEVRELLSSYDFPGDDIPIVRGSALCALEDKQPEIGRDAILKLMAEVDAYIPQPERPKDKPFLMPIEDVFSISGRGTVVTGRVERGVVKVGEEVEIVGIKNTVKTTCTGVEMFRKLLDQGEAGDNIGALLRGTKREDVERGQVLAAPGSITPHTDFEAEAYILNKEEGGRHTPFFTNYRPQFYFRTTDVTGVVALPEGTEMVMPGDNVKMIVTLIAPIAMDQGLRFAIREGGRTVGAGVVAKIIK.

In terms of domain architecture, tr-type G spans 10 to 206 (KPHCNIGTIG…EVDAYIPQPE (197 aa)). The tract at residues 19 to 26 (GHVDHGKT) is G1. 19 to 26 (GHVDHGKT) contacts GTP. T26 is a Mg(2+) binding site. The tract at residues 60-64 (GITIS) is G2. The interval 81–84 (DCPG) is G3. GTP is bound by residues 81–85 (DCPGH) and 136–139 (NKCD). Residues 136–139 (NKCD) form a G4 region. The G5 stretch occupies residues 174 to 176 (SAL).

This sequence belongs to the TRAFAC class translation factor GTPase superfamily. Classic translation factor GTPase family. EF-Tu/EF-1A subfamily. Monomer.

It localises to the cytoplasm. It carries out the reaction GTP + H2O = GDP + phosphate + H(+). GTP hydrolase that promotes the GTP-dependent binding of aminoacyl-tRNA to the A-site of ribosomes during protein biosynthesis. The sequence is that of Elongation factor Tu from Paramagnetospirillum magneticum (strain ATCC 700264 / AMB-1) (Magnetospirillum magneticum).